A 569-amino-acid polypeptide reads, in one-letter code: Dihydroxy-acid dehydratase (569 aa).

Residue C61 coordinates [2Fe-2S] cluster. D93 serves as a coordination point for Mg(2+). A [2Fe-2S] cluster-binding site is contributed by C134. The Mg(2+) site is built by D135 and K136. K136 is modified (N6-carboxylysine). Position 211 (C211) interacts with [2Fe-2S] cluster. Mg(2+) is bound at residue E462. Catalysis depends on S488, which acts as the Proton acceptor.

This sequence belongs to the IlvD/Edd family. As to quaternary structure, homodimer. It depends on [2Fe-2S] cluster as a cofactor. Mg(2+) serves as cofactor.

It catalyses the reaction (2R)-2,3-dihydroxy-3-methylbutanoate = 3-methyl-2-oxobutanoate + H2O. The catalysed reaction is (2R,3R)-2,3-dihydroxy-3-methylpentanoate = (S)-3-methyl-2-oxopentanoate + H2O. The protein operates within amino-acid biosynthesis; L-isoleucine biosynthesis; L-isoleucine from 2-oxobutanoate: step 3/4. It functions in the pathway amino-acid biosynthesis; L-valine biosynthesis; L-valine from pyruvate: step 3/4. In terms of biological role, functions in the biosynthesis of branched-chain amino acids. Catalyzes the dehydration of (2R,3R)-2,3-dihydroxy-3-methylpentanoate (2,3-dihydroxy-3-methylvalerate) into 2-oxo-3-methylpentanoate (2-oxo-3-methylvalerate) and of (2R)-2,3-dihydroxy-3-methylbutanoate (2,3-dihydroxyisovalerate) into 2-oxo-3-methylbutanoate (2-oxoisovalerate), the penultimate precursor to L-isoleucine and L-valine, respectively. The protein is Dihydroxy-acid dehydratase of Tropheryma whipplei (strain TW08/27) (Whipple's bacillus).